Reading from the N-terminus, the 689-residue chain is tRNA 5-methylaminomethyl-2-thiouridine biosynthesis bifunctional protein MnmC (689 aa).

Positions 1–245 (MNQRPIQTAT…KREMLTGTLP (245 aa)) are tRNA (mnm(5)s(2)U34)-methyltransferase. Residues 270-689 (IGGGIVSALT…RSPATQESSR (420 aa)) are FAD-dependent cmnm(5)s(2)U34 oxidoreductase.

It in the N-terminal section; belongs to the methyltransferase superfamily. tRNA (mnm(5)s(2)U34)-methyltransferase family. In the C-terminal section; belongs to the DAO family. The cofactor is FAD.

It localises to the cytoplasm. It carries out the reaction 5-aminomethyl-2-thiouridine(34) in tRNA + S-adenosyl-L-methionine = 5-methylaminomethyl-2-thiouridine(34) in tRNA + S-adenosyl-L-homocysteine + H(+). Catalyzes the last two steps in the biosynthesis of 5-methylaminomethyl-2-thiouridine (mnm(5)s(2)U) at the wobble position (U34) in tRNA. Catalyzes the FAD-dependent demodification of cmnm(5)s(2)U34 to nm(5)s(2)U34, followed by the transfer of a methyl group from S-adenosyl-L-methionine to nm(5)s(2)U34, to form mnm(5)s(2)U34. The sequence is that of tRNA 5-methylaminomethyl-2-thiouridine biosynthesis bifunctional protein MnmC from Yersinia pestis.